The following is a 202-amino-acid chain: GTP cyclohydrolase 1 (202 aa).

The Zn(2+) site is built by C90, H93, and C163.

Belongs to the GTP cyclohydrolase I family. Toroid-shaped homodecamer, composed of two pentamers of five dimers.

The catalysed reaction is GTP + H2O = 7,8-dihydroneopterin 3'-triphosphate + formate + H(+). The protein operates within cofactor biosynthesis; 7,8-dihydroneopterin triphosphate biosynthesis; 7,8-dihydroneopterin triphosphate from GTP: step 1/1. The sequence is that of GTP cyclohydrolase 1 (folE) from Mycobacterium bovis (strain ATCC BAA-935 / AF2122/97).